A 1230-amino-acid chain; its full sequence is Formin-like protein 14 (1230 aa).

In terms of domain architecture, Phosphatase tensin-type spans 1–194; the sequence is MSLLSRFFYK…QYVARRNINS (194 aa). The Phosphocysteine intermediate role is filled by Cys127. The C2 tensin-type domain occupies 200 to 339; sequence ERALSLDCVI…FRAEVLFGEV (140 aa). 3 disordered regions span residues 412-432, 460-822, and 1187-1230; these read FNSPDSEEETNTSSAADSSDE, HESS…LKPL, and ENEK…RHRT. Residues 484–496 show a composition bias toward low complexity; the sequence is DNPLNLPSDPPSS. 4 stretches are compositionally biased toward pro residues: residues 503 to 514, 524 to 535, 545 to 556, and 566 to 575; these read LPPPPPPPPPPL, SQPPPPPPPPPL, and SQPPPPPPLP. Positions 579–591 are enriched in polar residues; sequence NRDPLTTLHQPIN. 7 stretches are compositionally biased toward pro residues: residues 592–630, 637–649, 660–672, 679–688, 699–711, 718–728, and 735–766; these read KTPPPPPPPPPPLPSRSIPPPLAQPPPPRPPPPPPPPPS, PSAPPPPPPPPPS, QPPPPPPPPPPTR, APPPPPPPPT, PSTPPPPPPPPPK, PKPPAPPPLPP, and APPPPPPPPLSKTPAPPPPPLSKTPVPPPPPG. The FH2 domain occupies 809–1207; the sequence is VPTAAPKKTA…KLEKEAIKEK (399 aa). A compositionally biased stretch (basic and acidic residues) spans 1187 to 1215; sequence ENEKQAEAEKKKLEKEAIKEKSATKKDGV.

The protein belongs to the formin-like family. Class-II subfamily.

This is Formin-like protein 14 (FH14) from Arabidopsis thaliana (Mouse-ear cress).